The following is a 422-amino-acid chain: Lactoyl-CoA dehydratase subunit alpha (422 aa).

Belongs to the FldB/FldC dehydratase alpha/beta subunit family. As to quaternary structure, heterodimer of an alpha (LcdA) and a beta (LcdB) subunit. Requires [4Fe-4S] cluster as cofactor. FMN is required as a cofactor. The cofactor is riboflavin. Mg(2+) serves as cofactor.

It carries out the reaction (R)-lactoyl-CoA = acryloyl-CoA + H2O. It catalyses the reaction (2R)-hydroxybutanoyl-CoA = (2E)-butenoyl-CoA + H2O. With respect to regulation, activated by the LcdC protein. Functionally, involved in the acrylate pathway for the conversion of D-lactic acid to propionic acid. Catalyzes the reversible dehydration of Lactoyl-CoA and 2-hydroxybutyroyl-CoA to acryloyl-CoA and crotonyl-CoA, respectively. This chain is Lactoyl-CoA dehydratase subunit alpha (lcdA), found in Anaerotignum propionicum (Clostridium propionicum).